We begin with the raw amino-acid sequence, 347 residues long: NADH-ubiquinone oxidoreductase chain 2 (347 aa).

A run of 11 helical transmembrane segments spans residues 3-23, 25-45, 67-87, 96-116, 122-142, 145-165, 178-198, 200-220, 237-257, 274-294, and 325-345; these read PIILIIILMTVMLGTIIVMIS, HWLLIWIGFEMNMLAIIPIMM, SMLLMMAIIINLMFSGQWTVM, MLMTMALAMKLGMAPFHFWVP, IPLSSGLILLTWQKLAPMSVL, ILPSINLDLILTLSILSITIG, IMAYSSIAHMGWMTAVLLYNP, MTLLNLIIYIIMTSTMFTLFM, APIMTILVLITLLSMGGLPPL, DSIILPTLMAITALLNLYFYM, and LLPTMTVLSTMLLPLTPILSI.

The protein belongs to the complex I subunit 2 family. As to quaternary structure, core subunit of respiratory chain NADH dehydrogenase (Complex I) which is composed of 45 different subunits. Interacts with TMEM242.

Its subcellular location is the mitochondrion inner membrane. The catalysed reaction is a ubiquinone + NADH + 5 H(+)(in) = a ubiquinol + NAD(+) + 4 H(+)(out). In terms of biological role, core subunit of the mitochondrial membrane respiratory chain NADH dehydrogenase (Complex I) which catalyzes electron transfer from NADH through the respiratory chain, using ubiquinone as an electron acceptor. Essential for the catalytic activity and assembly of complex I. In Ovis aries (Sheep), this protein is NADH-ubiquinone oxidoreductase chain 2.